The primary structure comprises 420 residues: COP9 signalosome complex subunit 5 (420 aa).

An MPN domain is found at 73 to 208 (AALSALACMK…IGAFRTMPET (136 aa)). Residues H154, H156, and D167 each contribute to the Zn(2+) site. The JAMM motif motif lies at 154 to 167 (HSHPGYGCWLSGID).

This sequence belongs to the peptidase M67A family. CSN5 subfamily. Component of the COP9 signalosome (CSN) complex.

The protein resides in the cytoplasm. The protein localises to the nucleus. Catalytic component of the COP9 signalosome (CSN) complex that acts as an regulator of the ubiquitin (Ubl) conjugation pathway by mediating the deneddylation of the cullin subunit of SCF-type E3 ubiquitin-protein ligase complexes. The CSN complex is involved in the regulation of the mating pheromone response. This chain is COP9 signalosome complex subunit 5 (RRI1), found in Eremothecium gossypii (strain ATCC 10895 / CBS 109.51 / FGSC 9923 / NRRL Y-1056) (Yeast).